The primary structure comprises 238 residues: Probable metal transport system ATP-binding protein TP_0035 (238 aa).

The ABC transporter domain maps to 10–231 (VLLQNVSFRY…LDMQKKDALA (222 aa)). 44–51 (GENGSGKS) contributes to the ATP binding site.

The protein belongs to the ABC transporter superfamily.

Its subcellular location is the cell inner membrane. Part of an ATP-driven transport system TP_0034/TP_0035/TP_0036 for a metal. Probably responsible for energy coupling to the transport system. The polypeptide is Probable metal transport system ATP-binding protein TP_0035 (Treponema pallidum (strain Nichols)).